Here is a 347-residue protein sequence, read N- to C-terminus: KRR1 small subunit processome component homolog (347 aa).

The region spanning 124–194 (GCDIIKIGNL…VRDIVLETMN (71 aa)) is the KH domain. The segment covering 231–246 (NKNLSKRKQPKVKKPK) has biased composition (basic residues). The segment at 231-347 (NKNLSKRKQP…LLKANKKSKS (117 aa)) is disordered. Residues 271–304 (FLNKEQKQAKRQQERQTKQAEAAKKQDERRNKDF) are a coiled coil. Basic and acidic residues-rich tracts occupy residues 272 to 303 (LNKE…RNKD) and 318 to 329 (KANDNDSSDSRV). Basic residues predominate over residues 337–347 (KLLKANKKSKS).

This sequence belongs to the KRR1 family. As to quaternary structure, monomer. Component of the ribosomal small subunit (SSU) processome.

It is found in the nucleus. Its subcellular location is the nucleolus. Functionally, required for 40S ribosome biogenesis. Involved in nucleolar processing of pre-18S ribosomal RNA and ribosome assembly. Binds to RNA. Required for female germline development, cell viability during eye development and for survival of dividing cells and epithelial cells during early wing disk development. This is KRR1 small subunit processome component homolog from Drosophila willistoni (Fruit fly).